The chain runs to 453 residues: Adenylyltransferase and sulfurtransferase MOCS3 (453 aa).

Threonine 62 is modified (phosphothreonine). ATP is bound by residues glycine 101, aspartate 122, 129–133 (SNFHR), lysine 146, and 190–191 (DN). Residues cysteine 231 and cysteine 234 each contribute to the Zn(2+) site. Cysteine 248 functions as the Glycyl thioester intermediate; for adenylyltransferase activity in the catalytic mechanism. The Zn(2+) site is built by cysteine 306 and cysteine 309. Positions 355–451 (QAQPHLLIDV…WTNSVDPSFP (97 aa)) constitute a Rhodanese domain. Cysteine 410 (cysteine persulfide intermediate; for sulfurtransferase activity) is an active-site residue.

The protein in the N-terminal section; belongs to the HesA/MoeB/ThiF family. UBA4 subfamily. Requires Zn(2+) as cofactor.

The protein localises to the cytoplasm. Its subcellular location is the cytosol. The enzyme catalyses [molybdopterin-synthase sulfur-carrier protein]-C-terminal Gly-Gly + ATP + H(+) = [molybdopterin-synthase sulfur-carrier protein]-C-terminal Gly-Gly-AMP + diphosphate. It catalyses the reaction [molybdopterin-synthase sulfur-carrier protein]-C-terminal Gly-Gly-AMP + S-sulfanyl-L-cysteinyl-[cysteine desulfurase] + AH2 = [molybdopterin-synthase sulfur-carrier protein]-C-terminal-Gly-aminoethanethioate + L-cysteinyl-[cysteine desulfurase] + A + AMP + 2 H(+). Its pathway is tRNA modification; 5-methoxycarbonylmethyl-2-thiouridine-tRNA biosynthesis. It participates in cofactor biosynthesis; molybdopterin biosynthesis. In terms of biological role, plays a central role in 2-thiolation of mcm(5)S(2)U at tRNA wobble positions of cytosolic tRNA(Lys), tRNA(Glu) and tRNA(Gln). Also essential during biosynthesis of the molybdenum cofactor. Acts by mediating the C-terminal thiocarboxylation of sulfur carriers URM1 and MOCS2A. Its N-terminus first activates URM1 and MOCS2A as acyl-adenylates (-COAMP), then the persulfide sulfur on the catalytic cysteine is transferred to URM1 and MOCS2A to form thiocarboxylation (-COSH) of their C-terminus. The reaction probably involves hydrogen sulfide that is generated from the persulfide intermediate and that acts as a nucleophile towards URM1 and MOCS2A. Subsequently, a transient disulfide bond is formed. Does not use thiosulfate as sulfur donor; NFS1 probably acting as a sulfur donor for thiocarboxylation reactions. In Drosophila yakuba (Fruit fly), this protein is Adenylyltransferase and sulfurtransferase MOCS3.